Here is a 143-residue protein sequence, read N- to C-terminus: Large-conductance mechanosensitive channel (143 aa).

2 consecutive transmembrane segments (helical) span residues 10–30 (FAVK…GAFS) and 89–109 (GSFI…FLMV).

This sequence belongs to the MscL family. In terms of assembly, homopentamer.

It localises to the cell inner membrane. Channel that opens in response to stretch forces in the membrane lipid bilayer. May participate in the regulation of osmotic pressure changes within the cell. In Burkholderia multivorans (strain ATCC 17616 / 249), this protein is Large-conductance mechanosensitive channel.